A 114-amino-acid polypeptide reads, in one-letter code: Hydrogenase maturation factor HypA (114 aa).

Histidine 2 provides a ligand contact to Ni(2+). Positions 74, 77, 90, and 93 each coordinate Zn(2+).

Belongs to the HypA/HybF family.

Involved in the maturation of [NiFe] hydrogenases. Required for nickel insertion into the metal center of the hydrogenase. The protein is Hydrogenase maturation factor HypA of Campylobacter jejuni subsp. jejuni serotype O:2 (strain ATCC 700819 / NCTC 11168).